The primary structure comprises 148 residues: Arginine repressor (148 aa).

It belongs to the ArgR family.

It is found in the cytoplasm. It participates in amino-acid biosynthesis; L-arginine biosynthesis [regulation]. In terms of biological role, regulates arginine biosynthesis genes. This is Arginine repressor from Koribacter versatilis (strain Ellin345).